A 311-amino-acid chain; its full sequence is Aspartate carbamoyltransferase catalytic subunit (311 aa).

Positions 58 and 59 each coordinate carbamoyl phosphate. K86 is an L-aspartate binding site. Carbamoyl phosphate contacts are provided by R108, H136, and Q139. L-aspartate is bound by residues R169 and R224. Carbamoyl phosphate-binding residues include G265 and P266.

The protein belongs to the aspartate/ornithine carbamoyltransferase superfamily. ATCase family. In terms of assembly, heterododecamer (2C3:3R2) of six catalytic PyrB chains organized as two trimers (C3), and six regulatory PyrI chains organized as three dimers (R2).

It catalyses the reaction carbamoyl phosphate + L-aspartate = N-carbamoyl-L-aspartate + phosphate + H(+). It participates in pyrimidine metabolism; UMP biosynthesis via de novo pathway; (S)-dihydroorotate from bicarbonate: step 2/3. Functionally, catalyzes the condensation of carbamoyl phosphate and aspartate to form carbamoyl aspartate and inorganic phosphate, the committed step in the de novo pyrimidine nucleotide biosynthesis pathway. In Geobacter sulfurreducens (strain ATCC 51573 / DSM 12127 / PCA), this protein is Aspartate carbamoyltransferase catalytic subunit.